The following is a 140-amino-acid chain: Large ribosomal subunit protein bL17 (140 aa).

The tract at residues 120–140 (EDAKGQDSGPVMVDEDDFAEA) is disordered.

It belongs to the bacterial ribosomal protein bL17 family. Part of the 50S ribosomal subunit. Contacts protein L32.

The protein is Large ribosomal subunit protein bL17 of Erythrobacter litoralis (strain HTCC2594).